The chain runs to 354 residues: Uroporphyrinogen decarboxylase (354 aa).

Substrate-binding positions include 27-31 (RQAGR), Asp77, Tyr154, Ser209, and His327.

Belongs to the uroporphyrinogen decarboxylase family. Homodimer.

Its subcellular location is the cytoplasm. The catalysed reaction is uroporphyrinogen III + 4 H(+) = coproporphyrinogen III + 4 CO2. It participates in porphyrin-containing compound metabolism; protoporphyrin-IX biosynthesis; coproporphyrinogen-III from 5-aminolevulinate: step 4/4. Functionally, catalyzes the decarboxylation of four acetate groups of uroporphyrinogen-III to yield coproporphyrinogen-III. The polypeptide is Uroporphyrinogen decarboxylase (Shewanella sp. (strain ANA-3)).